Consider the following 438-residue polypeptide: MPKYEDKVDLYDDRGNLVEEQVPIEALSPLRNTAIKKIIHDIKRTVAVNLEGIENALRSAKVGGSGCHIPGRELDVDVIDNAEAIAEKAKEMIQVEEGDDTVVELLHDGKRALVKVPSSRLESAAEYSVAPLVTASAFIQSIIDVCDISIYDANMVKAAVLGRYPQSVEYVGGNIATMLDIPQKLEGPGYALRNILVNHIVAATLKNTLQAVALSSILEHTAMFEMGDAVGKFERLHLLGLAYQGLNADNLLYDLVKANGKDGTVGSVVEDVVERAKEDGVIKVEKELNGYKVYGTDDLALWNAYAAAGLVAATIVNQGAARAAQGVSSTILYDNDIIEFERGLPGVDFGRAEGTAVGFSFFSHSIYGGGGPGIFNGNHIVTRHSKGFAIPCVAAAMALDAGTQMFSPELTSGLIKDVFSKVDEFREPLKYVVELQPK.

Y367 provides a ligand contact to coenzyme M. G369 serves as a coordination point for coenzyme B.

It belongs to the methyl-coenzyme M reductase beta subunit family. As to quaternary structure, MCR is a hexamer of two alpha, two beta, and two gamma chains, forming a dimer of heterotrimers. Coenzyme F430 serves as cofactor.

It localises to the cytoplasm. The catalysed reaction is coenzyme B + methyl-coenzyme M = methane + coenzyme M-coenzyme B heterodisulfide. It functions in the pathway one-carbon metabolism; methyl-coenzyme M reduction; methane from methyl-coenzyme M: step 1/1. In terms of biological role, component of the methyl-coenzyme M reductase (MCR) I that catalyzes the reductive cleavage of methyl-coenzyme M (CoM-S-CH3 or 2-(methylthio)ethanesulfonate) using coenzyme B (CoB or 7-mercaptoheptanoylthreonine phosphate) as reductant which results in the production of methane and the mixed heterodisulfide of CoB and CoM (CoM-S-S-CoB). This is the final step in methanogenesis. In Methanothermus fervidus, this protein is Methyl-coenzyme M reductase subunit beta (mcrB).